We begin with the raw amino-acid sequence, 590 residues long: Negative elongation factor D (590 aa).

A disordered region spans residues 15-43 (YGSAAEWGDEADGGQQEDDSGEGEDDAEV). A compositionally biased stretch (acidic residues) spans 21–43 (WGDEADGGQQEDDSGEGEDDAEV).

The protein belongs to the NELF-D family. In terms of assembly, the NELF complex is composed of NELFA, NELFB, NELFCD and NELFE; NELFA and NELFCD form a stable subcomplex that binds primarily through NELFCD to the N-terminus of NELFB. Binds RNA which may help to stabilize the NELF complex on nucleic acid. In vitro, the NELFA:NELFCD subcomplex binds to ssDNA and ssRNA in a sequence- and structure-dependent manner. Interacts with ARAF1. Interacts with PCF11. Interacts with NELFB. Interacts with KAT8.

The protein localises to the nucleus. Essential component of the NELF complex, a complex that negatively regulates the elongation of transcription by RNA polymerase II. The NELF complex, which acts via an association with the DSIF complex and causes transcriptional pausing, is counteracted by the P-TEFb kinase complex. This Pongo abelii (Sumatran orangutan) protein is Negative elongation factor D (NELFCD).